A 181-amino-acid chain; its full sequence is Large ribosomal subunit protein uL6 (181 aa).

The protein belongs to the universal ribosomal protein uL6 family. Part of the 50S ribosomal subunit.

Functionally, this protein binds to the 23S rRNA, and is important in its secondary structure. It is located near the subunit interface in the base of the L7/L12 stalk, and near the tRNA binding site of the peptidyltransferase center. This chain is Large ribosomal subunit protein uL6, found in Synechococcus sp. (strain JA-3-3Ab) (Cyanobacteria bacterium Yellowstone A-Prime).